We begin with the raw amino-acid sequence, 314 residues long: 4-hydroxy-3-methylbut-2-enyl diphosphate reductase (314 aa).

Cysteine 12 contributes to the [4Fe-4S] cluster binding site. Histidine 41 and histidine 74 together coordinate (2E)-4-hydroxy-3-methylbut-2-enyl diphosphate. Dimethylallyl diphosphate is bound by residues histidine 41 and histidine 74. 2 residues coordinate isopentenyl diphosphate: histidine 41 and histidine 74. A [4Fe-4S] cluster-binding site is contributed by cysteine 96. Histidine 124 contacts (2E)-4-hydroxy-3-methylbut-2-enyl diphosphate. A dimethylallyl diphosphate-binding site is contributed by histidine 124. Position 124 (histidine 124) interacts with isopentenyl diphosphate. Glutamate 126 (proton donor) is an active-site residue. Threonine 167 serves as a coordination point for (2E)-4-hydroxy-3-methylbut-2-enyl diphosphate. Cysteine 197 provides a ligand contact to [4Fe-4S] cluster. (2E)-4-hydroxy-3-methylbut-2-enyl diphosphate contacts are provided by serine 225, serine 226, asparagine 227, and serine 269. Dimethylallyl diphosphate is bound by residues serine 225, serine 226, asparagine 227, and serine 269. The isopentenyl diphosphate site is built by serine 225, serine 226, asparagine 227, and serine 269.

Belongs to the IspH family. [4Fe-4S] cluster serves as cofactor.

The catalysed reaction is isopentenyl diphosphate + 2 oxidized [2Fe-2S]-[ferredoxin] + H2O = (2E)-4-hydroxy-3-methylbut-2-enyl diphosphate + 2 reduced [2Fe-2S]-[ferredoxin] + 2 H(+). The enzyme catalyses dimethylallyl diphosphate + 2 oxidized [2Fe-2S]-[ferredoxin] + H2O = (2E)-4-hydroxy-3-methylbut-2-enyl diphosphate + 2 reduced [2Fe-2S]-[ferredoxin] + 2 H(+). Its pathway is isoprenoid biosynthesis; dimethylallyl diphosphate biosynthesis; dimethylallyl diphosphate from (2E)-4-hydroxy-3-methylbutenyl diphosphate: step 1/1. The protein operates within isoprenoid biosynthesis; isopentenyl diphosphate biosynthesis via DXP pathway; isopentenyl diphosphate from 1-deoxy-D-xylulose 5-phosphate: step 6/6. Functionally, catalyzes the conversion of 1-hydroxy-2-methyl-2-(E)-butenyl 4-diphosphate (HMBPP) into a mixture of isopentenyl diphosphate (IPP) and dimethylallyl diphosphate (DMAPP). Acts in the terminal step of the DOXP/MEP pathway for isoprenoid precursor biosynthesis. This is 4-hydroxy-3-methylbut-2-enyl diphosphate reductase from Actinobacillus succinogenes (strain ATCC 55618 / DSM 22257 / CCUG 43843 / 130Z).